A 406-amino-acid chain; its full sequence is Cholinephosphotransferase 1 (406 aa).

Alanine 2 is modified (N-acetylalanine). Residues 2 to 62 (AAGAGARPAP…LLQWIPLWMA (61 aa)) are Cytoplasmic-facing. Residues 63–83 (PNSITLLGLAINMLTTLVLIS) form a helical membrane-spanning segment. A CDP-choline-binding site is contributed by asparagine 64. Residues 84 to 93 (YCPTVTEEAP) lie on the Lumenal side of the membrane. Residues 94 to 118 (YWTYLLCALGLFIYQSLDAIDGKQA) form a helical membrane-spanning segment. Positions 111 and 114 each coordinate Mg(2+). Arginine 119 contacts CDP-choline. At 119–125 (RRTNSCS) the chain is on the cytoplasmic side. The chain crosses the membrane as a helical span at residues 126–150 (PLGELFDHGCDSLSTVFMAVGASIA). Aspartate 132 contributes to the Mg(2+) binding site. Histidine 133 functions as the Proton acceptor in the catalytic mechanism. A Mg(2+)-binding site is contributed by aspartate 136. Residues 151–160 (VRLGTHPDWL) are Lumenal-facing. A helical membrane pass occupies residues 161 to 179 (FFCSFIGMFMFYCAHWQTY). Topologically, residues 180–190 (VSGVLRFGKVD) are cytoplasmic. Residues 191–207 (VTEIQIALVIVFVLSTF) traverse the membrane as a helical segment. Residues 208 to 222 (GGATMWDYTIPILEI) are Lumenal-facing. The chain crosses the membrane as a helical span at residues 223–248 (KLKILPVLGVVGGAIFSCSNYFHVIL). Residues 249–265 (HGGVGKNGSTIAGTSVL) lie on the Cytoplasmic side of the membrane. The helical transmembrane segment at 266 to 281 (SPGLHIGIIIILAIMI) threads the bilayer. Over 282–293 (YKKSATNLFEKH) the chain is Lumenal. Residues 294–316 (PCLYTLMFGCVFAKVSQKLVIAH) form a helical membrane-spanning segment. Residues 317-329 (MTKSELYLQDTVF) lie on the Cytoplasmic side of the membrane. A helical transmembrane segment spans residues 330-339 (IGPGLLFLDQ). The Lumenal portion of the chain corresponds to 340-346 (YFNNFVD). Residues 347–376 (EYIVLWIAMVISSLDMMRYFSALCLQISRH) traverse the membrane as a helical segment. At 377–406 (LHLSIFKTSCHQAPEQVQVLPPKSHQNNMD) the chain is on the cytoplasmic side.

The protein belongs to the CDP-alcohol phosphatidyltransferase class-I family. Mg(2+) serves as cofactor. Mn(2+) is required as a cofactor.

It is found in the golgi apparatus membrane. The catalysed reaction is CDP-choline + a 1,2-diacyl-sn-glycerol = a 1,2-diacyl-sn-glycero-3-phosphocholine + CMP + H(+). It catalyses the reaction 1-octadecanoyl-2-(5Z,8Z,11Z,14Z-eicosatetraenoyl)-sn-glycerol + CDP-choline = 1-octadecanoyl-2-(5Z,8Z,11Z,14Z-eicosatetraenoyl)-sn-glycero-3-phosphocholine + CMP + H(+). The enzyme catalyses 1-hexadecanoyl-2-(9Z-octadecenoyl)-sn-glycerol + CDP-choline = 1-hexadecanoyl-2-(9Z-octadecenoyl)-sn-glycero-3-phosphocholine + CMP + H(+). It carries out the reaction 1-hexadecanoyl-2-(4Z,7Z,10Z,13Z,16Z,19Z-docosahexaenoyl)-sn-glycerol + CDP-choline = 1-hexadecanoyl-2-(4Z,7Z,10Z,13Z,16Z,19Z-docosahexaenoyl)-sn-glycero-3-phosphocholine + CMP + H(+). The catalysed reaction is 1,2-dioctanoyl-sn-glycerol + CDP-choline = 1,2-dioctanoyl-sn-glycero-3-phosphocholine + CMP + H(+). Its pathway is phospholipid metabolism; phosphatidylcholine biosynthesis; phosphatidylcholine from phosphocholine: step 2/2. In terms of biological role, catalyzes the final step of de novo phosphatidylcholine (PC) synthesis, i.e. the transfer of choline phosphate from CDP-choline to the free hydroxyl of a diacylglycerol (DAG), producing a PC. It thereby plays a central role in the formation and maintenance of vesicular membranes. In Bos taurus (Bovine), this protein is Cholinephosphotransferase 1 (CHPT1).